The sequence spans 97 residues: Class II hydrophobin 3 (97 aa).

The N-terminal stretch at 1–16 (MKFFAAAALFIAGVLA) is a signal peptide. 4 disulfides stabilise this stretch: C30–C79, C40–C70, C41–C53, and C80–C91.

This sequence belongs to the cerato-ulmin hydrophobin family. In terms of assembly, homodimer. Homodimers further self-assemble to form highly ordered films at water-air interfaces through intermolecular interactions.

It localises to the secreted. The protein localises to the cell wall. In terms of biological role, aerial growth, conidiation, and dispersal of filamentous fungi in the environment rely upon a capability of their secreting small amphipathic proteins called hydrophobins (HPBs) with low sequence identity. Class I can self-assemble into an outermost layer of rodlet bundles on aerial cell surfaces, conferring cellular hydrophobicity that supports fungal growth, development and dispersal; whereas Class II form highly ordered films at water-air interfaces through intermolecular interactions but contribute nothing to the rodlet structure. The polypeptide is Class II hydrophobin 3 (Trichoderma asperellum (strain ATCC 204424 / CBS 433.97 / NBRC 101777)).